Reading from the N-terminus, the 110-residue chain is Large ribosomal subunit protein uL22 (110 aa).

Belongs to the universal ribosomal protein uL22 family. Part of the 50S ribosomal subunit.

Its function is as follows. This protein binds specifically to 23S rRNA; its binding is stimulated by other ribosomal proteins, e.g. L4, L17, and L20. It is important during the early stages of 50S assembly. It makes multiple contacts with different domains of the 23S rRNA in the assembled 50S subunit and ribosome. Functionally, the globular domain of the protein is located near the polypeptide exit tunnel on the outside of the subunit, while an extended beta-hairpin is found that lines the wall of the exit tunnel in the center of the 70S ribosome. The sequence is that of Large ribosomal subunit protein uL22 from Nitrosomonas eutropha (strain DSM 101675 / C91 / Nm57).